A 147-amino-acid polypeptide reads, in one-letter code: Ribosome-binding factor A (147 aa).

The segment at 122-147 (QQQFGSVDDDVIENDIEESDDTEGKV) is disordered. Positions 128–147 (VDDDVIENDIEESDDTEGKV) are enriched in acidic residues.

This sequence belongs to the RbfA family. As to quaternary structure, monomer. Binds 30S ribosomal subunits, but not 50S ribosomal subunits or 70S ribosomes.

It is found in the cytoplasm. One of several proteins that assist in the late maturation steps of the functional core of the 30S ribosomal subunit. Associates with free 30S ribosomal subunits (but not with 30S subunits that are part of 70S ribosomes or polysomes). Required for efficient processing of 16S rRNA. May interact with the 5'-terminal helix region of 16S rRNA. The polypeptide is Ribosome-binding factor A (Shewanella oneidensis (strain ATCC 700550 / JCM 31522 / CIP 106686 / LMG 19005 / NCIMB 14063 / MR-1)).